Reading from the N-terminus, the 576-residue chain is Putative export ATP-binding/permease protein RC1073 (576 aa).

The region spanning 20 to 303 (LIIVMISLLS…IFELLSEMHL (284 aa)) is the ABC transmembrane type-1 domain. 6 consecutive transmembrane segments (helical) span residues 21–41 (IIVMISLLSVSASLLLIGSVF), 57–77 (VDNSILYICLLIIILSIASFF), 135–155 (FLSFFIRNSVMLIGSITLMFF), 158–178 (FKLASIVIITIPILLIPLIKF), 242–262 (ALFFAISIAVIFLAITLVVWI), and 277–297 (IISFIYYAIIAGVSCGGIFEL). The region spanning 336 to 572 (IEFKNVDFTY…SEIYRNICRE (237 aa)) is the ABC transporter domain. Residue 371–378 (GRSGAGKS) participates in ATP binding.

It belongs to the ABC transporter superfamily. Homodimer.

Its subcellular location is the cell inner membrane. Functionally, part of an ABC transporter complex. Transmembrane domains (TMD) form a pore in the inner membrane and the ATP-binding domain (NBD) is responsible for energy generation. This chain is Putative export ATP-binding/permease protein RC1073, found in Rickettsia conorii (strain ATCC VR-613 / Malish 7).